We begin with the raw amino-acid sequence, 372 residues long: Glutamate 5-kinase (372 aa).

Lysine 14 provides a ligand contact to ATP. Serine 54, aspartate 141, and asparagine 153 together coordinate substrate. 173–174 (TD) provides a ligand contact to ATP. Residues 280–358 (RGHVVIDAGA…GEIESVLGYM (79 aa)) form the PUA domain.

This sequence belongs to the glutamate 5-kinase family.

The protein localises to the cytoplasm. It carries out the reaction L-glutamate + ATP = L-glutamyl 5-phosphate + ADP. The protein operates within amino-acid biosynthesis; L-proline biosynthesis; L-glutamate 5-semialdehyde from L-glutamate: step 1/2. Functionally, catalyzes the transfer of a phosphate group to glutamate to form L-glutamate 5-phosphate. The chain is Glutamate 5-kinase from Burkholderia lata (strain ATCC 17760 / DSM 23089 / LMG 22485 / NCIMB 9086 / R18194 / 383).